The primary structure comprises 308 residues: D-alanine--D-alanine ligase (308 aa).

One can recognise an ATP-grasp domain in the interval 104–304; that stretch reads KQALVPHGIP…YAELVERIVE (201 aa). 131–187 serves as a coordination point for ATP; the sequence is LPRPYVLKPVNEGSSVGVAIVRDDSNYGNPISRDALGPWQQFDRLLAEPFIKGRELT. Positions 255, 271, and 273 each coordinate Mg(2+).

It belongs to the D-alanine--D-alanine ligase family. Requires Mg(2+) as cofactor. The cofactor is Mn(2+).

It is found in the cytoplasm. The catalysed reaction is 2 D-alanine + ATP = D-alanyl-D-alanine + ADP + phosphate + H(+). It participates in cell wall biogenesis; peptidoglycan biosynthesis. Its function is as follows. Cell wall formation. This chain is D-alanine--D-alanine ligase, found in Sphingopyxis alaskensis (strain DSM 13593 / LMG 18877 / RB2256) (Sphingomonas alaskensis).